Reading from the N-terminus, the 623-residue chain is Calnexin (623 aa).

Positions 1-21 are cleaved as a signal peptide; the sequence is MLNRKWSFVFLTFLLVISVNA. Residue Asp108 coordinates Ca(2+). A disulfide bridge connects residues Cys151 and Cys185. The an alpha-D-glucoside site is built by Tyr155, Lys157, Tyr176, and Asp183. N-linked (GlcNAc...) asparagine glycosylation occurs at Asn202. The disordered stretch occupies residues 260 to 337; sequence SLTPPKEIFD…QKPQDWDEDM (78 aa). Residues 266-276 are compositionally biased toward basic and acidic residues; it reads EIFDETDLKPE. The interval 267–400 is p domain (Extended arm); it reads IFDETDLKPE…RLIDNPNYFE (134 aa). Repeat copies occupy residues 269 to 281, 286 to 298, 305 to 317, 324 to 336, and 339 to 349. 2 4 X approximate repeats regions span residues 269 to 336 and 339 to 396; these read DETD…WDED and GSWE…IDNP. Acidic residues-rich tracts occupy residues 277 to 287 and 314 to 323; these read DWDEREQIEDE and WNEEENELIP. Cys351 and Cys357 are joined by a disulfide. 3 tandem repeats follow at residues 358–368, 372–382, and 386–396. An alpha-D-glucoside is bound at residue Glu416. Position 427 (Asp427) interacts with Ca(2+). Residues 480 to 500 form a helical membrane-spanning segment; the sequence is LWAVYILCILLPLIAIGVFCF. Residues 536–623 are disordered; the sequence is IAEDEEDNQP…AKRRTARRGD (88 aa). Positions 556-565 are enriched in acidic residues; it reads IDEDEQDEVE. Residues 566 to 581 show a composition bias toward low complexity; the sequence is QQPSSSKTASSESSSA. Residues 614 to 623 are compositionally biased toward basic residues; sequence AKRRTARRGD.

It belongs to the calreticulin family. Post-translationally, glycosylation is important for its biological activity.

The protein localises to the endoplasmic reticulum membrane. It localises to the cytoplasm. It is found in the perinuclear region. The protein resides in the cytoplasmic vesicle. Its function is as follows. Calcium-binding protein that interacts with newly synthesized monoglucosylated glycoproteins in the endoplasmic reticulum. It may act in assisting protein assembly and/or in the retention within the ER of unassembled protein subunits. It seems to play a major role in the quality control apparatus of the ER by the retention of incorrectly folded proteins. Required for embryogenesis and larval development under heat and ER stress conditions. May be important for germ cell development. Involved in neuronal necrotic cell death. This is Calnexin from Caenorhabditis briggsae.